The primary structure comprises 146 residues: uncharacterized protein (146 aa).

Transmembrane regions (helical) follow at residues 1-21 (MFAN…AASL), 35-55 (AAVY…LFVG), 87-107 (GGAG…GVGH), and 111-131 (AIAA…GGHL).

It is found in the cell membrane. This is an uncharacterized protein from Mycobacterium tuberculosis (strain CDC 1551 / Oshkosh).